Here is a 225-residue protein sequence, read N- to C-terminus: uncharacterized protein (225 aa).

This is an uncharacterized protein from Bacillus subtilis (strain 168).